We begin with the raw amino-acid sequence, 599 residues long: Mediator of RNA polymerase II transcription subunit 26 (599 aa).

The region spanning 10-87 (QIRDRLLQAI…RSWQKLIEPV (78 aa)) is the TFIIS N-terminal domain. 3 disordered regions span residues 98 to 331 (AGAP…RLEL), 352 to 403 (AGLG…RDYT), and 427 to 470 (FDPM…LQSP). Residues 123 to 133 (SVHDLKYRNDM) are compositionally biased toward basic and acidic residues. The segment covering 174 to 191 (VPNSSPLPTNGISGSPES) has biased composition (polar residues). Basic and acidic residues predominate over residues 207 to 218 (NRLEHGENDKHS). Positions 314 to 324 (SPLPLAQPSTP) are enriched in pro residues. Residues 441–463 (EPVRADSPVHTEQPRTELDKPEA) show a composition bias toward basic and acidic residues. A phosphoserine mark is found at S447 and S469.

Belongs to the Mediator complex subunit 26 family. As to quaternary structure, component of the Mediator complex, which is composed of MED1, MED4, MED6, MED7, MED8, MED9, MED10, MED11, MED12, MED13, MED13L, MED14, MED15, MED16, MED17, MED18, MED19, MED20, MED21, MED22, MED23, MED24, MED25, MED26, MED27, MED29, MED30, MED31, CCNC, CDK8 and CDC2L6/CDK11. The MED12, MED13, CCNC and CDK8 subunits form a distinct module termed the CDK8 module. Mediator containing the CDK8 module is less active than Mediator lacking this module in supporting transcriptional activation. Individual preparations of the Mediator complex lacking one or more distinct subunits have been variously termed ARC, CRSP, DRIP, PC2, SMCC and TRAP. Interacts with CEBPB (when not methylated).

It is found in the nucleus. Its function is as follows. Component of the Mediator complex, a coactivator involved in the regulated transcription of nearly all RNA polymerase II-dependent genes. Mediator functions as a bridge to convey information from gene-specific regulatory proteins to the basal RNA polymerase II transcription machinery. Mediator is recruited to promoters by direct interactions with regulatory proteins and serves as a scaffold for the assembly of a functional pre-initiation complex with RNA polymerase II and the general transcription factors. This Bos taurus (Bovine) protein is Mediator of RNA polymerase II transcription subunit 26 (MED26).